The sequence spans 131 residues: Small ribosomal subunit protein eS24 (131 aa).

M1 is modified (N-acetylmethionine). The residue at position 9 (T9) is a Phosphothreonine. Residue K37 forms a Glycyl lysine isopeptide (Lys-Gly) (interchain with G-Cter in SUMO2) linkage. Positions 90–100 (RLARHGLYEKK) are enriched in basic and acidic residues. The disordered stretch occupies residues 90–131 (RLARHGLYEKKKTSRKQRKERKNRMKKVRGTAKANVGAGKKK). Residues 101–119 (KTSRKQRKERKNRMKKVRG) are compositionally biased toward basic residues.

It belongs to the eukaryotic ribosomal protein eS24 family. In terms of assembly, component of the small ribosomal subunit. Part of the small subunit (SSU) processome, composed of more than 70 proteins and the RNA chaperone small nucleolar RNA (snoRNA) U3.

Its subcellular location is the cytoplasm. The protein localises to the nucleus. It is found in the nucleolus. Component of the small ribosomal subunit. The ribosome is a large ribonucleoprotein complex responsible for the synthesis of proteins in the cell. Required for processing of pre-rRNA and maturation of 40S ribosomal subunits. Part of the small subunit (SSU) processome, first precursor of the small eukaryotic ribosomal subunit. During the assembly of the SSU processome in the nucleolus, many ribosome biogenesis factors, an RNA chaperone and ribosomal proteins associate with the nascent pre-rRNA and work in concert to generate RNA folding, modifications, rearrangements and cleavage as well as targeted degradation of pre-ribosomal RNA by the RNA exosome. This is Small ribosomal subunit protein eS24 (RPS24) from Pongo abelii (Sumatran orangutan).